The following is a 248-amino-acid chain: Trihelix transcription factor ENAP2 (248 aa).

The span at 1-13 shows a compositional bias: polar residues; it reads METTTPQSKSSVS. The segment at 1–20 is disordered; the sequence is METTTPQSKSSVSHRPPLGR. The segment at residues 24–113 is a DNA-binding region (MADF); that stretch reads WSEEATATLV…RLDVLIGPVV (90 aa). The short motif at 69 to 76 is the Nuclear localization signal element; the sequence is RKKTDLQC. Residues 123–150 are disordered; it reads SAPFKNHLNPTGSNSTGSSLEDDDEDDD. Positions 130-141 are enriched in polar residues; it reads LNPTGSNSTGSS. The stretch at 190-210 forms a coiled coil; that stretch reads YERIEGKKQQMMIELEKQRME.

As to quaternary structure, interacts with the Agrobacterium tumefaciens virulence protein F (VirF) in the nucleus. Binds to EIN2 C-terminal region in the presence of ethylene.

The protein localises to the nucleus. It localises to the nucleoplasm. Probable transcription regulator. Promotes histone acetylation during ethylene signaling in an EIN2-dependent manner, thus regulating positively ethylene-responsive genes. This is Trihelix transcription factor ENAP2 from Arabidopsis thaliana (Mouse-ear cress).